A 446-amino-acid polypeptide reads, in one-letter code: tRNA modification GTPase MnmE (446 aa).

(6S)-5-formyl-5,6,7,8-tetrahydrofolate-binding residues include Arg-24, Glu-81, and Lys-120. In terms of domain architecture, TrmE-type G spans 216–368 (GLHAVLIGPP…LHIRLRELAL (153 aa)). Asn-226 is a K(+) binding site. GTP-binding positions include 226 to 231 (NAGKSS), 245 to 251 (TDVAGTT), and 270 to 273 (DTAG). Mg(2+) is bound at residue Ser-230. Positions 245, 247, and 250 each coordinate K(+). Residue Thr-251 participates in Mg(2+) binding. Lys-446 lines the (6S)-5-formyl-5,6,7,8-tetrahydrofolate pocket.

It belongs to the TRAFAC class TrmE-Era-EngA-EngB-Septin-like GTPase superfamily. TrmE GTPase family. Homodimer. Heterotetramer of two MnmE and two MnmG subunits. Requires K(+) as cofactor.

It is found in the cytoplasm. Its function is as follows. Exhibits a very high intrinsic GTPase hydrolysis rate. Involved in the addition of a carboxymethylaminomethyl (cmnm) group at the wobble position (U34) of certain tRNAs, forming tRNA-cmnm(5)s(2)U34. This Xanthomonas oryzae pv. oryzae (strain MAFF 311018) protein is tRNA modification GTPase MnmE.